Here is an 863-residue protein sequence, read N- to C-terminus: MICAL-like protein 1 (863 aa).

One can recognise a Calponin-homology (CH) domain in the interval 2 to 108 (AGPRGALLAW…YVSQYYNHFC (107 aa)). Disordered stretches follow at residues 119–162 (RKGL…TPSS) and 224–670 (GTRS…PLIK). Pro residues predominate over residues 125 to 135 (CSPPSVAPTPV). Composition is skewed to low complexity over residues 143–159 (GEELSSGSLSEQGTGQT) and 224–244 (GTRSGTRPGPFSQPKQQHQQQ). The LIM zinc-binding domain occupies 162–225 (STCAACQQHV…EHCARLGPGT (64 aa)). A phosphoserine mark is found at serine 295 and serine 309. Residue threonine 318 is modified to Phosphothreonine. A compositionally biased stretch (polar residues) spans 325–340 (LQQENLVEQAGSSSLV). Residues 384–395 (APLPPSSSPGPP) show a composition bias toward pro residues. Serine 391 carries the post-translational modification Phosphoserine. The NPF1 signature appears at 425 to 427 (NPF). The segment covering 427-438 (FEEEEEDKEEEA) has biased composition (acidic residues). Over residues 439-450 (PAAPSLATSPAL) the composition is skewed to low complexity. Threonine 467 and threonine 469 each carry phosphothreonine. 4 positions are modified to phosphoserine: serine 470, serine 471, serine 484, and serine 486. Low complexity-rich tracts occupy residues 482–495 (APSASPLALHASRL), 505–520 (PSPALSVESLSSESAS), and 553–566 (SLSTNSSLASSGEL). Residues serine 578 and serine 621 each carry the phosphoserine modification. Residues 633–635 (NPF) carry the NPF2 motif. Over residues 638 to 656 (KPSPAASPATKKATKGSKP) the composition is skewed to low complexity. Residues 652–863 (KGSKPVRPPA…AKSKSPRDKS (212 aa)) are mediates the interaction with RAB13 and RAB35 and intramolecular interaction with the CH domain. Residues 671–818 (RKVQADQYIP…EEEEDKMLEA (148 aa)) form the bMERB domain. Residues 682–711 (EDIHGEMDTIERRLDALEHRGVLLEEKLRG) are a coiled coil. Residues 700 to 863 (HRGVLLEEKL…AKSKSPRDKS (164 aa)) are necessary and sufficient to associate with tubular recycling endosome membranes, mediate phosphatidic acid-binding and membrane tubulation. Serine 740 carries the phosphoserine modification. Residues 785-830 (MQELVTLIEQRNAIINCLDEDRQREEEEDKMLEAMIKKKEFQREAE) adopt a coiled-coil conformation.

As to quaternary structure, homooligomer. Interacts (via NPF1 motif) with EHD1 (via EH domain); the interaction is direct and probably recruits EHD1 to membranes. Interacts with EHD3 (via EH domain). Interacts with RAB35 (GTP-bound form); the interaction is direct and probably recruits MICALL1 to membranes. Interacts with ACAP2; the interaction is indirect through RAB35. Interacts with RAB8A (GTP-bound form); regulates RAB8A association with recycling endosomes. Interacts with RAB13 (GTP-bound form). Interacts with ARF6 (GTP-bound form). Interacts with PACSIN2 (via the SH3 domain). Interacts with DPYSL2.

It is found in the recycling endosome membrane. It localises to the late endosome membrane. Its subcellular location is the cell projection. The protein localises to the cilium membrane. The protein resides in the cytoplasm. It is found in the cytoskeleton. It localises to the microtubule organizing center. Its subcellular location is the centrosome. The protein localises to the centriole. In terms of biological role, lipid-binding protein with higher affinity for phosphatidic acid, a lipid enriched in recycling endosome membranes. On endosome membranes, acts as a downstream effector of Rab proteins recruiting cytosolic proteins to regulate membrane tubulation. Involved in a late step of receptor-mediated endocytosis regulating for instance endocytosed-EGF receptor trafficking. Alternatively, regulates slow endocytic recycling of endocytosed proteins back to the plasma membrane. Also involved in cargo protein delivery to the plasma membrane. Plays a role in ciliogenesis coordination, recruits EHD1 to primary cilium where it is anchored to the centriole through interaction with tubulins. May indirectly play a role in neurite outgrowth. The sequence is that of MICAL-like protein 1 (MICALL1) from Homo sapiens (Human).